A 282-amino-acid polypeptide reads, in one-letter code: 4-deoxy-L-threo-5-hexosulose-uronate ketol-isomerase 2 (282 aa).

The Zn(2+) site is built by H200, H202, E207, and H249.

Belongs to the KduI family. Zn(2+) is required as a cofactor.

The catalysed reaction is 5-dehydro-4-deoxy-D-glucuronate = 3-deoxy-D-glycero-2,5-hexodiulosonate. The protein operates within glycan metabolism; pectin degradation; 2-dehydro-3-deoxy-D-gluconate from pectin: step 4/5. Functionally, catalyzes the isomerization of 5-dehydro-4-deoxy-D-glucuronate to 3-deoxy-D-glycero-2,5-hexodiulosonate. This chain is 4-deoxy-L-threo-5-hexosulose-uronate ketol-isomerase 2 (kduI2), found in Rhizobium meliloti (strain 1021) (Ensifer meliloti).